The primary structure comprises 337 residues: Ornithine carbamoyltransferase, catabolic (337 aa).

Residues 57 to 60 (STRT), Gln84, Arg108, and 135 to 138 (HPTQ) contribute to the carbamoyl phosphate site. L-ornithine is bound by residues Asn167, Asp231, and 235–236 (SM). Carbamoyl phosphate contacts are provided by residues 272–273 (CL) and Arg317.

Belongs to the aspartate/ornithine carbamoyltransferase superfamily. OTCase family.

The protein resides in the cytoplasm. It catalyses the reaction carbamoyl phosphate + L-ornithine = L-citrulline + phosphate + H(+). It participates in amino-acid degradation; L-arginine degradation via ADI pathway; carbamoyl phosphate from L-arginine: step 2/2. In terms of biological role, reversibly catalyzes the transfer of the carbamoyl group from carbamoyl phosphate (CP) to the N(epsilon) atom of ornithine (ORN) to produce L-citrulline. The protein is Ornithine carbamoyltransferase, catabolic of Streptococcus ratti.